Here is a 101-residue protein sequence, read N- to C-terminus: Small ribosomal subunit protein uS17 (101 aa).

It belongs to the universal ribosomal protein uS17 family. Part of the 30S ribosomal subunit.

Functionally, one of the primary rRNA binding proteins, it binds specifically to the 5'-end of 16S ribosomal RNA. This Koribacter versatilis (strain Ellin345) protein is Small ribosomal subunit protein uS17.